A 457-amino-acid polypeptide reads, in one-letter code: Putative hexose transporter 12 (457 aa).

Residues 1–2 (MG) are Cytoplasmic-facing. A helical membrane pass occupies residues 3-23 (LIVSIFNIGCAIGGIVLSKVG). Residues 24–29 (DIYGRR) lie on the Extracellular side of the membrane. The helical transmembrane segment at 30–50 (IGLITVTAIYVVGILIQITSI) threads the bilayer. Topologically, residues 51–60 (NKWYQYFIGR) are cytoplasmic. A helical transmembrane segment spans residues 61–81 (IISGIGVGGIAVLSPMLISEV). Topologically, residues 82-87 (APKHIR) are extracellular. Residues 88–108 (GTLVQLYQLMGTMGIFLGYCT) form a helical membrane-spanning segment. The Cytoplasmic portion of the chain corresponds to 109 to 122 (NYGTKNYHNATQWR). A helical transmembrane segment spans residues 123–143 (VGLGLCFAWATFMVSGMMFVP). Residues 144-247 (ESPRYLIEVG…KSVGLKDSFQ (104 aa)) are Extracellular-facing. Asn194 carries N-linked (GlcNAc...) asparagine glycosylation. The helical transmembrane segment at 248–268 (TSIIIGVVNFFSSFIAVYTIE) threads the bilayer. Over 269-274 (RFGRRT) the chain is Cytoplasmic. The chain crosses the membrane as a helical span at residues 275–295 (CLLWGAASMLCCFAVFASVGV). Residues 296–319 (TKLWPQGSSHQDITSQGAGNCMIV) lie on the Extracellular side of the membrane. A helical membrane pass occupies residues 320-340 (FTMFFIFSFATTWAGGCFVIV). The Cytoplasmic portion of the chain corresponds to 341–353 (SETFPLRAKSRGM). The helical transmembrane segment at 354–374 (AIATAANWMWGFLISFFTPFI) threads the bilayer. Residues 375–379 (TGAIN) are Extracellular-facing. The helical transmembrane segment at 380–400 (FYYGYVFLGCLVFAYFYVFFF) threads the bilayer. At 401–457 (VPETKGLTLEEVNTMWLEGVPAWKSASWVPPERRTADYDADAIDHDNRPIYKRFFSS) the chain is on the cytoplasmic side.

The protein belongs to the major facilitator superfamily. Sugar transporter (TC 2.A.1.1) family.

The protein resides in the membrane. In terms of biological role, probable glucose transporter. This chain is Putative hexose transporter 12 (HXT12), found in Saccharomyces cerevisiae (strain ATCC 204508 / S288c) (Baker's yeast).